Here is a 309-residue protein sequence, read N- to C-terminus: D-allose kinase (309 aa).

ATP is bound by residues 10-17 and 142-149; these read GVDMGATH and GMGFAVWM.

Belongs to the ROK (NagC/XylR) family.

The catalysed reaction is D-allose + ATP = D-allose 6-phosphate + ADP + H(+). The protein operates within carbohydrate degradation; D-allose degradation. Its function is as follows. Catalyzes the phosphorylation of D-allose to D-allose 6-phosphate. Also has low level glucokinase activity in vitro. This is D-allose kinase from Escherichia coli (strain K12).